We begin with the raw amino-acid sequence, 84 residues long: RNA-binding protein Hfq (84 aa).

The Sm domain maps to 10–69 (DPFLNILRKERIPVSIYLVNGIKLQGQIDSFDQYVVLLKNSVTQMVYKHAISTIVPAKAI).

It belongs to the Hfq family. As to quaternary structure, homohexamer.

In terms of biological role, RNA chaperone that binds small regulatory RNA (sRNAs) and mRNAs to facilitate mRNA translational regulation in response to envelope stress, environmental stress and changes in metabolite concentrations. Also binds with high specificity to tRNAs. The protein is RNA-binding protein Hfq of Nitrosomonas europaea (strain ATCC 19718 / CIP 103999 / KCTC 2705 / NBRC 14298).